A 118-amino-acid polypeptide reads, in one-letter code: V-type proton ATPase subunit G 1 (118 aa).

Ala2 is modified (N-acetylalanine). A disordered region spans residues Ala25–Arg90. Residues Gln35–Gln56 show a composition bias toward basic and acidic residues. 2 stretches are compositionally biased toward polar residues: residues Ser57–Leu69 and Arg78–Gln89.

It belongs to the V-ATPase G subunit family. In terms of assembly, V-ATPase is a heteromultimeric enzyme made up of two complexes: the ATP-hydrolytic V1 complex and the proton translocation V0 complex. The V1 complex consists of three catalytic AB heterodimers that form a heterohexamer, three peripheral stalks each consisting of EG heterodimers, one central rotor including subunits D and F, and the regulatory subunits C and H. The proton translocation complex V0 consists of the proton transport subunit a, a ring of proteolipid subunits c9c'', rotary subunit d, subunits e and f, and the accessory subunits ATP6AP1/Ac45 and ATP6AP2/PRR.

The protein localises to the apical cell membrane. Its function is as follows. Subunit of the V1 complex of vacuolar(H+)-ATPase (V-ATPase), a multisubunit enzyme composed of a peripheral complex (V1) that hydrolyzes ATP and a membrane integral complex (V0) that translocates protons. V-ATPase is responsible for acidifying and maintaining the pH of intracellular compartments and in some cell types, is targeted to the plasma membrane, where it is responsible for acidifying the extracellular environment. In aerobic conditions, involved in intracellular iron homeostasis, thus triggering the activity of Fe(2+) prolyl hydroxylase (PHD) enzymes, and leading to HIF1A hydroxylation and subsequent proteasomal degradation. In Pan troglodytes (Chimpanzee), this protein is V-type proton ATPase subunit G 1 (ATP6V1G1).